The chain runs to 422 residues: 5'-deoxyadenosine deaminase (422 aa).

Zn(2+)-binding residues include histidine 57 and histidine 59. Positions 86 and 178 each coordinate substrate. Position 205 (histidine 205) interacts with Zn(2+). Substrate is bound by residues glutamate 208 and aspartate 294. Aspartate 294 contacts Zn(2+).

This sequence belongs to the metallo-dependent hydrolases superfamily. MTA/SAH deaminase family. Homotetramer. Zn(2+) serves as cofactor.

The enzyme catalyses 5'-deoxyadenosine + H2O + H(+) = 5'-deoxyinosine + NH4(+). It catalyses the reaction S-adenosyl-L-homocysteine + H2O + H(+) = S-inosyl-L-homocysteine + NH4(+). It carries out the reaction S-methyl-5'-thioadenosine + H2O + H(+) = S-methyl-5'-thioinosine + NH4(+). The catalysed reaction is adenosine + H2O + H(+) = inosine + NH4(+). It functions in the pathway amino-acid biosynthesis; S-adenosyl-L-methionine biosynthesis. In terms of biological role, catalyzes the deamination of three SAM-derived enzymatic products, namely 5'-deoxyadenosine, S-adenosyl-L-homocysteine, and 5'-methylthioadenosine, to produce the inosine analogs. Can also deaminate adenosine. The preferred substrate for this enzyme is 5'-deoxyadenosine, but all these substrates are efficiently deaminated. Likely functions in a S-adenosyl-L-methionine (SAM) recycling pathway from S-adenosyl-L-homocysteine (SAH) produced from SAM-dependent methylation reactions. May also be involved in the recycling of 5'-deoxyadenosine, whereupon the 5'-deoxyribose moiety of 5'-deoxyinosine is further metabolized to deoxyhexoses used for the biosynthesis of aromatic amino acids in methanogens. The sequence is that of 5'-deoxyadenosine deaminase from Methanococcus maripaludis (strain DSM 14266 / JCM 13030 / NBRC 101832 / S2 / LL).